A 391-amino-acid chain; its full sequence is DNA primase small subunit PriS (391 aa).

Catalysis depends on residues Asp-98, Asp-100, and Asp-294.

Belongs to the eukaryotic-type primase small subunit family. As to quaternary structure, heterodimer of a small subunit (PriS) and a large subunit (PriL). The cofactor is Mg(2+). It depends on Mn(2+) as a cofactor.

Functionally, catalytic subunit of DNA primase, an RNA polymerase that catalyzes the synthesis of short RNA molecules used as primers for DNA polymerase during DNA replication. The small subunit contains the primase catalytic core and has DNA synthesis activity on its own. Binding to the large subunit stabilizes and modulates the activity, increasing the rate of DNA synthesis while decreasing the length of the DNA fragments, and conferring RNA synthesis capability. The DNA polymerase activity may enable DNA primase to also catalyze primer extension after primer synthesis. May also play a role in DNA repair. The protein is DNA primase small subunit PriS of Halobacterium salinarum (strain ATCC 29341 / DSM 671 / R1).